A 139-amino-acid polypeptide reads, in one-letter code: Hydrogenase maturation factor HypA (139 aa).

Histidine 2 is a Ni(2+) binding site. Positions 73, 76, 110, and 113 each coordinate Zn(2+).

It belongs to the HypA/HybF family.

Its function is as follows. Involved in the maturation of [NiFe] hydrogenases. Required for nickel insertion into the metal center of the hydrogenase. This Pyrococcus abyssi (strain GE5 / Orsay) protein is Hydrogenase maturation factor HypA.